Here is a 475-residue protein sequence, read N- to C-terminus: Protein transport protein Sec61 subunit alpha (475 aa).

10 helical membrane passes run 33–53, 76–96, 118–138, 145–165, 173–193, 241–261, 289–309, 354–374, 420–440, and 441–461; these read LWTA…LFGI, LMEL…LLAG, LFGM…GMYG, AGIC…VLLL, YGLG…TIVW, NLMN…FQGF, IPII…QMLA, FLDP…CAFF, AAFG…IGAI, and GSGT…EIFV.

It belongs to the SecY/SEC61-alpha family. The SEC61 channel-forming translocon complex consists of channel-forming core components SEC61A1, SEC61B and SEC61G and different auxiliary components such as SEC62 and SEC63. The SEC61 channel associates with the multi-pass translocon (MPT) complex. As to expression, expressed predominantly in epidermal cells of the embryo.

It localises to the endoplasmic reticulum membrane. Component of SEC61 channel-forming translocon complex that mediates transport of signal peptide-containing precursor polypeptides across the endoplasmic reticulum (ER). Forms a ribosome receptor and a gated pore in the ER membrane, both functions required for cotranslational translocation of nascent polypeptides. May cooperate with auxiliary protein SEC62, SEC63 and HSPA5/BiP to enable post-translational transport of small presecretory proteins. The SEC61 channel is also involved in ER membrane insertion of transmembrane proteins: it mediates membrane insertion of the first few transmembrane segments of proteins, while insertion of subsequent transmembrane regions of multi-pass membrane proteins is mediated by the multi-pass translocon (MPT) complex. This chain is Protein transport protein Sec61 subunit alpha, found in Halocynthia roretzi (Sea squirt).